The primary structure comprises 122 residues: Large ribosomal subunit protein bL12 (122 aa).

Belongs to the bacterial ribosomal protein bL12 family. As to quaternary structure, homodimer. Part of the ribosomal stalk of the 50S ribosomal subunit. Forms a multimeric L10(L12)X complex, where L10 forms an elongated spine to which 2 to 4 L12 dimers bind in a sequential fashion. Binds GTP-bound translation factors.

Forms part of the ribosomal stalk which helps the ribosome interact with GTP-bound translation factors. Is thus essential for accurate translation. This Yersinia pseudotuberculosis serotype O:1b (strain IP 31758) protein is Large ribosomal subunit protein bL12.